A 185-amino-acid polypeptide reads, in one-letter code: Ribosome-recycling factor (185 aa).

Belongs to the RRF family.

The protein resides in the cytoplasm. Functionally, responsible for the release of ribosomes from messenger RNA at the termination of protein biosynthesis. May increase the efficiency of translation by recycling ribosomes from one round of translation to another. The sequence is that of Ribosome-recycling factor from Campylobacter concisus (strain 13826).